The sequence spans 947 residues: DNA mismatch repair protein MutS (947 aa).

620-627 is a binding site for ATP; it reads GPNMSGKS.

The protein belongs to the DNA mismatch repair MutS family.

Its function is as follows. This protein is involved in the repair of mismatches in DNA. It is possible that it carries out the mismatch recognition step. This protein has a weak ATPase activity. The protein is DNA mismatch repair protein MutS of Clostridioides difficile (strain 630) (Peptoclostridium difficile).